The chain runs to 288 residues: Light-independent protochlorophyllide reductase iron-sulfur ATP-binding protein (288 aa).

Residues 10–15 and Lys39 each bind ATP; that span reads GIGKST. Residue Ser14 coordinates Mg(2+). Cys95 and Cys129 together coordinate [4Fe-4S] cluster. 180–181 is an ATP binding site; that stretch reads NR.

This sequence belongs to the NifH/BchL/ChlL family. In terms of assembly, homodimer. Protochlorophyllide reductase is composed of three subunits; ChlL, ChlN and ChlB. [4Fe-4S] cluster is required as a cofactor.

It catalyses the reaction chlorophyllide a + oxidized 2[4Fe-4S]-[ferredoxin] + 2 ADP + 2 phosphate = protochlorophyllide a + reduced 2[4Fe-4S]-[ferredoxin] + 2 ATP + 2 H2O. It participates in porphyrin-containing compound metabolism; chlorophyll biosynthesis (light-independent). Functionally, component of the dark-operative protochlorophyllide reductase (DPOR) that uses Mg-ATP and reduced ferredoxin to reduce ring D of protochlorophyllide (Pchlide) to form chlorophyllide a (Chlide). This reaction is light-independent. The L component serves as a unique electron donor to the NB-component of the complex, and binds Mg-ATP. This is Light-independent protochlorophyllide reductase iron-sulfur ATP-binding protein from Nostoc sp. (strain PCC 7120 / SAG 25.82 / UTEX 2576).